The primary structure comprises 286 residues: MAGAKEIRSKIASIKSTQKITSAMEKVAVSKMRKAQMRMAASRPYAERIRQVIGHLANANPEYRHPFMIERPVKRVGYVVVSSDRGLCGGLNTNLFKTLVKDMAVNRENGVEIDLCVVGSKGAAFFRNFGGNVVAAISHLGEEPSINDLIGSVKVMLDAYLDGRIDRLSVVSNKFINTMTQQPTVEQLIPLVATPDQGLKHHWDYLYEPDAKELLDGLMVRYVESQVYQAVVENNAAEQAARMIAMKNATDNAGDLISDLQLIYNKARQAAITQEISEIVGGAAAV.

Belongs to the ATPase gamma chain family. In terms of assembly, F-type ATPases have 2 components, CF(1) - the catalytic core - and CF(0) - the membrane proton channel. CF(1) has five subunits: alpha(3), beta(3), gamma(1), delta(1), epsilon(1). CF(0) has three main subunits: a, b and c.

Its subcellular location is the cell inner membrane. Its function is as follows. Produces ATP from ADP in the presence of a proton gradient across the membrane. The gamma chain is believed to be important in regulating ATPase activity and the flow of protons through the CF(0) complex. This Pseudomonas savastanoi pv. phaseolicola (strain 1448A / Race 6) (Pseudomonas syringae pv. phaseolicola (strain 1448A / Race 6)) protein is ATP synthase gamma chain.